We begin with the raw amino-acid sequence, 525 residues long: C6 finger transcription factor fsqA (525 aa).

Residues 12–53 constitute a DNA-binding region (zn(2)-C6 fungal-type); the sequence is CDRCRGQKLRCVGAGKPIPNSSSRLLRNEIPCDRCRRAKVEC. Disordered regions lie at residues 80 to 142, 204 to 260, and 327 to 371; these read RSSS…LGDM, EWNS…EPAG, and RARS…ARSS. Polar residues predominate over residues 95 to 115; the sequence is PPNSLVTAASKPHPNSLSFNH. A compositionally biased stretch (polar residues) spans 327-337; the sequence is RARSQWSSLPE.

It localises to the nucleus. Transcription factor that regulates the expression of the gene cluster that mediates the biosynthesis of the isoquinoline alkaloids fumisoquin A, fumisoquin B and fumisoquin C; as well as small amounts of fumipyrrole as a shunt metabolite. The products of the cluster lead to a brown coloration and are important for growth and conidiation. The polypeptide is C6 finger transcription factor fsqA (Aspergillus fumigatus (strain ATCC MYA-4609 / CBS 101355 / FGSC A1100 / Af293) (Neosartorya fumigata)).